The sequence spans 248 residues: Small ribosomal subunit protein eS1 (248 aa).

Residues 1–21 form a disordered region; sequence MAVGKDKRISKGKKGGKKKIV.

It belongs to the eukaryotic ribosomal protein eS1 family. In terms of assembly, component of the small ribosomal subunit. Mature ribosomes consist of a small (40S) and a large (60S) subunit. The 40S subunit contains about 33 different proteins and 1 molecule of RNA (18S). The 60S subunit contains about 49 different proteins and 3 molecules of RNA (25S, 5.8S and 5S).

It is found in the cytoplasm. This is Small ribosomal subunit protein eS1 from Syntrichia ruralis (Great hairy screw-moss).